Reading from the N-terminus, the 571-residue chain is Proline--tRNA ligase (571 aa).

It belongs to the class-II aminoacyl-tRNA synthetase family. ProS type 1 subfamily. As to quaternary structure, homodimer.

The protein resides in the cytoplasm. The catalysed reaction is tRNA(Pro) + L-proline + ATP = L-prolyl-tRNA(Pro) + AMP + diphosphate. In terms of biological role, catalyzes the attachment of proline to tRNA(Pro) in a two-step reaction: proline is first activated by ATP to form Pro-AMP and then transferred to the acceptor end of tRNA(Pro). As ProRS can inadvertently accommodate and process non-cognate amino acids such as alanine and cysteine, to avoid such errors it has two additional distinct editing activities against alanine. One activity is designated as 'pretransfer' editing and involves the tRNA(Pro)-independent hydrolysis of activated Ala-AMP. The other activity is designated 'posttransfer' editing and involves deacylation of mischarged Ala-tRNA(Pro). The misacylated Cys-tRNA(Pro) is not edited by ProRS. In Shewanella putrefaciens (strain CN-32 / ATCC BAA-453), this protein is Proline--tRNA ligase.